The primary structure comprises 40 residues: Photosystem II reaction center protein J (40 aa).

Residues 8–28 (IPLWLIGTVTGTLVIGLIGIF) traverse the membrane as a helical segment.

The protein belongs to the PsbJ family. As to quaternary structure, PSII is composed of 1 copy each of membrane proteins PsbA, PsbB, PsbC, PsbD, PsbE, PsbF, PsbH, PsbI, PsbJ, PsbK, PsbL, PsbM, PsbT, PsbX, PsbY, PsbZ, Psb30/Ycf12, at least 3 peripheral proteins of the oxygen-evolving complex and a large number of cofactors. It forms dimeric complexes.

The protein localises to the plastid. It is found in the chloroplast thylakoid membrane. In terms of biological role, one of the components of the core complex of photosystem II (PSII). PSII is a light-driven water:plastoquinone oxidoreductase that uses light energy to abstract electrons from H(2)O, generating O(2) and a proton gradient subsequently used for ATP formation. It consists of a core antenna complex that captures photons, and an electron transfer chain that converts photonic excitation into a charge separation. This is Photosystem II reaction center protein J from Cycas taitungensis (Prince sago).